Reading from the N-terminus, the 182-residue chain is Protein canopy homolog 2 (182 aa).

The N-terminal stretch at 1–20 is a signal peptide; that stretch reads MKGWGWLALLLGALLGTAWA. The region spanning 24 to 175 is the Saposin B-type domain; that stretch reads QDLHCGACRA…KRTDLCDHAL (152 aa). 3 disulfide bridges follow: C28/C171, C31/C164, and C86/C137. S115 is modified (phosphoserine). The short motif at 179-182 is the Prevents secretion from ER element; sequence HDEL.

It belongs to the canopy family. Interacts with MYLIP/MIR. As to expression, expressed in different tissues. Highest levels are detected in adult placenta, liver and pancreas.

It localises to the endoplasmic reticulum. Functionally, positive regulator of neurite outgrowth by stabilizing myosin regulatory light chain (MRLC). It prevents MIR-mediated MRLC ubiquitination and its subsequent proteasomal degradation. The chain is Protein canopy homolog 2 (CNPY2) from Homo sapiens (Human).